A 361-amino-acid chain; its full sequence is tRNA(Ile)-lysidine synthase (361 aa).

32 to 37 (SGGPDS) contacts ATP.

Belongs to the tRNA(Ile)-lysidine synthase family.

It is found in the cytoplasm. It catalyses the reaction cytidine(34) in tRNA(Ile2) + L-lysine + ATP = lysidine(34) in tRNA(Ile2) + AMP + diphosphate + H(+). Ligates lysine onto the cytidine present at position 34 of the AUA codon-specific tRNA(Ile) that contains the anticodon CAU, in an ATP-dependent manner. Cytidine is converted to lysidine, thus changing the amino acid specificity of the tRNA from methionine to isoleucine. The chain is tRNA(Ile)-lysidine synthase from Bradyrhizobium diazoefficiens (strain JCM 10833 / BCRC 13528 / IAM 13628 / NBRC 14792 / USDA 110).